The sequence spans 429 residues: Adenylosuccinate synthetase (429 aa).

GTP contacts are provided by residues 12–18 and 40–42; these read GDEGKGK and GHT. Asp13 acts as the Proton acceptor in catalysis. Asp13 and Gly40 together coordinate Mg(2+). Residues 13–16, 38–41, Thr128, Arg142, Gln223, Thr238, and Arg302 contribute to the IMP site; these read DEGK and NAGH. The Proton donor role is filled by His41. 298-304 provides a ligand contact to substrate; the sequence is VNTGRPR. GTP is bound by residues Arg304, 330–332, and 412–414; these read KLD and GVG.

Belongs to the adenylosuccinate synthetase family. Homodimer. Requires Mg(2+) as cofactor.

The protein resides in the cytoplasm. It carries out the reaction IMP + L-aspartate + GTP = N(6)-(1,2-dicarboxyethyl)-AMP + GDP + phosphate + 2 H(+). The protein operates within purine metabolism; AMP biosynthesis via de novo pathway; AMP from IMP: step 1/2. Plays an important role in the de novo pathway of purine nucleotide biosynthesis. Catalyzes the first committed step in the biosynthesis of AMP from IMP. This chain is Adenylosuccinate synthetase, found in Micrococcus luteus (strain ATCC 4698 / DSM 20030 / JCM 1464 / CCM 169 / CCUG 5858 / IAM 1056 / NBRC 3333 / NCIMB 9278 / NCTC 2665 / VKM Ac-2230) (Micrococcus lysodeikticus).